Here is a 243-residue protein sequence, read N- to C-terminus: 3-deoxy-manno-octulosonate cytidylyltransferase (243 aa).

It belongs to the KdsB family.

It localises to the cytoplasm. It catalyses the reaction 3-deoxy-alpha-D-manno-oct-2-ulosonate + CTP = CMP-3-deoxy-beta-D-manno-octulosonate + diphosphate. It functions in the pathway nucleotide-sugar biosynthesis; CMP-3-deoxy-D-manno-octulosonate biosynthesis; CMP-3-deoxy-D-manno-octulosonate from 3-deoxy-D-manno-octulosonate and CTP: step 1/1. Activates KDO (a required 8-carbon sugar) for incorporation into bacterial lipopolysaccharide in Gram-negative bacteria. This chain is 3-deoxy-manno-octulosonate cytidylyltransferase, found in Wigglesworthia glossinidia brevipalpis.